The primary structure comprises 362 residues: Cytoskeleton protein RodZ (362 aa).

The Cytoplasmic portion of the chain corresponds to Met1–Gly111. The HTH cro/C1-type domain maps to Leu19–Leu79. The H-T-H motif DNA-binding region spans Gln30–Glu49. Residues Trp112 to Trp132 form a helical; Signal-anchor for type II membrane protein membrane-spanning segment. Residues Trp133 to Glu362 lie on the Periplasmic side of the membrane. A disordered region spans residues Ser151–Gly277. Over residues Ser193–Thr221 the composition is skewed to low complexity. Positions Val223–His242 are enriched in polar residues. Positions Ala246 to Pro259 are enriched in low complexity.

It belongs to the RodZ family.

Its subcellular location is the cell inner membrane. Cytoskeletal protein that is involved in cell-shape control through regulation of the length of the long axis. The chain is Cytoskeleton protein RodZ from Yersinia pseudotuberculosis serotype IB (strain PB1/+).